We begin with the raw amino-acid sequence, 802 residues long: DNA mismatch repair protein MutS (802 aa).

Residue 617–624 coordinates ATP; sequence GPNMGGKS.

The protein belongs to the DNA mismatch repair MutS family.

In terms of biological role, this protein is involved in the repair of mismatches in DNA. It is possible that it carries out the mismatch recognition step. This protein has a weak ATPase activity. The sequence is that of DNA mismatch repair protein MutS from Buchnera aphidicola subsp. Acyrthosiphon pisum (strain Tuc7).